Consider the following 630-residue polypeptide: 1-deoxy-D-xylulose-5-phosphate synthase (630 aa).

Residues His-72 and 113 to 115 (GHS) each bind thiamine diphosphate. Residue Asp-144 participates in Mg(2+) binding. Thiamine diphosphate contacts are provided by residues 145 to 146 (GA), Asn-173, Tyr-284, and Glu-367. Asn-173 contacts Mg(2+).

This sequence belongs to the transketolase family. DXPS subfamily. As to quaternary structure, homodimer. It depends on Mg(2+) as a cofactor. Requires thiamine diphosphate as cofactor.

It carries out the reaction D-glyceraldehyde 3-phosphate + pyruvate + H(+) = 1-deoxy-D-xylulose 5-phosphate + CO2. It participates in metabolic intermediate biosynthesis; 1-deoxy-D-xylulose 5-phosphate biosynthesis; 1-deoxy-D-xylulose 5-phosphate from D-glyceraldehyde 3-phosphate and pyruvate: step 1/1. Functionally, catalyzes the acyloin condensation reaction between C atoms 2 and 3 of pyruvate and glyceraldehyde 3-phosphate to yield 1-deoxy-D-xylulose-5-phosphate (DXP). The polypeptide is 1-deoxy-D-xylulose-5-phosphate synthase (Bacillus mycoides (strain KBAB4) (Bacillus weihenstephanensis)).